The sequence spans 262 residues: Type III pantothenate kinase (262 aa).

6 to 13 contributes to the ATP binding site; the sequence is DVGNTNAV. Substrate-binding positions include Y100 and 107-110; that span reads GADR. Residue D109 is the Proton acceptor of the active site. D129 lines the K(+) pocket. T132 serves as a coordination point for ATP. T184 contributes to the substrate binding site.

Belongs to the type III pantothenate kinase family. In terms of assembly, homodimer. It depends on NH4(+) as a cofactor. Requires K(+) as cofactor.

The protein resides in the cytoplasm. The catalysed reaction is (R)-pantothenate + ATP = (R)-4'-phosphopantothenate + ADP + H(+). The protein operates within cofactor biosynthesis; coenzyme A biosynthesis; CoA from (R)-pantothenate: step 1/5. In terms of biological role, catalyzes the phosphorylation of pantothenate (Pan), the first step in CoA biosynthesis. The sequence is that of Type III pantothenate kinase from Bacillus cereus (strain G9842).